We begin with the raw amino-acid sequence, 327 residues long: Replication factor C small subunit (327 aa).

47-54 (GPPGTGKT) contacts ATP.

It belongs to the activator 1 small subunits family. RfcS subfamily. Heteromultimer composed of small subunits (RfcS) and large subunits (RfcL).

Its function is as follows. Part of the RFC clamp loader complex which loads the PCNA sliding clamp onto DNA. This chain is Replication factor C small subunit, found in Sulfurisphaera tokodaii (strain DSM 16993 / JCM 10545 / NBRC 100140 / 7) (Sulfolobus tokodaii).